The chain runs to 328 residues: MALSADVKAELNRVLVTRHDVMTAEVASLLRYTAALHLVGKKIVVESEVDSAETARRLTDMVEQLYKIEPEHQIIGAGNLRRRPRHVLRWTEGGMELARRTELIDRVGRPVRGLPRFIIGGTKDQCVAAWRGAFLAHGYITDPGRSSALEVQTPSNEAALALVGAARRIDVTAKTKEARGVNRVVIRDGDSIGRLLMLMGAQDTREVWEKQRRTRENRAKANRLANFDDANLRRSARAAVAAAARVERALEILDNDVPQHLAHAGQLRVEHKEASLEELGRLAEPPMTKDAVAGRIRRLLSMADKRAEELGLPDTHSAVTSELFNDVD.

The H-T-H motif DNA-binding region spans 275-308 (SLEELGRLAEPPMTKDAVAGRIRRLLSMADKRAE).

The protein belongs to the WhiA family.

Functionally, involved in cell division and chromosome segregation. The polypeptide is Probable cell division protein WhiA (Corynebacterium jeikeium (strain K411)).